Here is an 80-residue protein sequence, read N- to C-terminus: CLAVATA3/ESR (CLE)-related protein 40 (80 aa).

An N-terminal signal peptide occupies residues 1–25 (MAAMKYKGSVFIILVILLLSSSLLA). The tract at residues 45-80 (MKKEKKIDGGTANEVEERQVPTGSDPLHHKHIPFTP) is disordered. A Hydroxyproline modification is found at Pro-65.

Belongs to the CLV3/ESR signal peptide family. In terms of tissue distribution, mostly expressed at low levels in stems and apex, and, to a lower extent, in roots, seedlings, leaves, flowers, siliques and pollen.

The protein resides in the secreted. Its subcellular location is the extracellular space. Extracellular signal peptide secreted by differentiated root cells that regulates root cell fate. Acts with ACR4 as a ligand-receptor pair in a signal transduction pathway, coordinating movement of the root tip and organization of cell divisions in the root meristem. Promotes cell differentiation in the distal root meristem in a dose-dependent manner, especially the transition from columella stem cells (CSC) daughters into columella cells (CCs). Induces ACR4 expression in root quiescent center (QC). Involved in WUX5 QC-specific expression pattern regulation. Regulates the transition of protophloem cells from proliferation to differentiation, thus impinging on postembryonic growth capacity of the root meristem; this signaling pathway requires CRN and CLV2. This chain is CLAVATA3/ESR (CLE)-related protein 40, found in Arabidopsis thaliana (Mouse-ear cress).